We begin with the raw amino-acid sequence, 185 residues long: MLKEIKTKTKERMLKTIQSFYNDIKGIRTGRASASLLDGIVVNIYGGHQKLNQVAGVSVTDNKTLLIKVWDIGVIGEVKNAILNANLNLNPVVEGNTIRIVLPDLTQETRERLVKLLHQFAENARVAIRNIRRDIMEEIERMQENKKISEDDFHNAKKEIQNITDDNIKKIDGELSIKEKDILNY.

It belongs to the RRF family.

It localises to the cytoplasm. Its function is as follows. Responsible for the release of ribosomes from messenger RNA at the termination of protein biosynthesis. May increase the efficiency of translation by recycling ribosomes from one round of translation to another. The sequence is that of Ribosome-recycling factor from Wolbachia sp. subsp. Brugia malayi (strain TRS).